Reading from the N-terminus, the 572-residue chain is Urease subunit alpha (572 aa).

In terms of domain architecture, Urease spans 134–572 (GGIDSHIHFI…LPMTQRYFLF (439 aa)). Residues H139, H141, and K222 each contribute to the Ni(2+) site. K222 is modified (N6-carboxylysine). Residue H224 coordinates substrate. Ni(2+)-binding residues include H251 and H277. The Proton donor role is filled by H325. Position 365 (D365) interacts with Ni(2+).

The protein belongs to the metallo-dependent hydrolases superfamily. Urease alpha subunit family. In terms of assembly, heterotrimer of UreA (gamma), UreB (beta) and UreC (alpha) subunits. Three heterotrimers associate to form the active enzyme. It depends on Ni cation as a cofactor. Carboxylation allows a single lysine to coordinate two nickel ions.

The protein localises to the cytoplasm. The enzyme catalyses urea + 2 H2O + H(+) = hydrogencarbonate + 2 NH4(+). It participates in nitrogen metabolism; urea degradation; CO(2) and NH(3) from urea (urease route): step 1/1. This chain is Urease subunit alpha, found in Polaromonas sp. (strain JS666 / ATCC BAA-500).